The following is a 198-amino-acid chain: Ribonuclease HII (198 aa).

Positions 9–198 (ITVAGADEAG…LLPDQLKIDF (190 aa)) constitute an RNase H type-2 domain. The a divalent metal cation site is built by aspartate 15, glutamate 16, and aspartate 107.

This sequence belongs to the RNase HII family. The cofactor is Mn(2+). Mg(2+) is required as a cofactor.

The protein localises to the cytoplasm. It carries out the reaction Endonucleolytic cleavage to 5'-phosphomonoester.. Endonuclease that specifically degrades the RNA of RNA-DNA hybrids. In Christiangramia forsetii (strain DSM 17595 / CGMCC 1.15422 / KT0803) (Gramella forsetii), this protein is Ribonuclease HII.